The sequence spans 295 residues: 4-hydroxy-3-methylbut-2-enyl diphosphate reductase (295 aa).

C12 serves as a coordination point for [4Fe-4S] cluster. (2E)-4-hydroxy-3-methylbut-2-enyl diphosphate contacts are provided by H43 and H81. Dimethylallyl diphosphate-binding residues include H43 and H81. The isopentenyl diphosphate site is built by H43 and H81. Residue C103 participates in [4Fe-4S] cluster binding. H131 is a (2E)-4-hydroxy-3-methylbut-2-enyl diphosphate binding site. A dimethylallyl diphosphate-binding site is contributed by H131. H131 contacts isopentenyl diphosphate. Residue E133 is the Proton donor of the active site. (2E)-4-hydroxy-3-methylbut-2-enyl diphosphate is bound at residue T171. C199 provides a ligand contact to [4Fe-4S] cluster. Residues S227, N229, and S272 each coordinate (2E)-4-hydroxy-3-methylbut-2-enyl diphosphate. Dimethylallyl diphosphate-binding residues include S227, N229, and S272. Isopentenyl diphosphate-binding residues include S227, N229, and S272.

The protein belongs to the IspH family. It depends on [4Fe-4S] cluster as a cofactor.

The catalysed reaction is isopentenyl diphosphate + 2 oxidized [2Fe-2S]-[ferredoxin] + H2O = (2E)-4-hydroxy-3-methylbut-2-enyl diphosphate + 2 reduced [2Fe-2S]-[ferredoxin] + 2 H(+). It catalyses the reaction dimethylallyl diphosphate + 2 oxidized [2Fe-2S]-[ferredoxin] + H2O = (2E)-4-hydroxy-3-methylbut-2-enyl diphosphate + 2 reduced [2Fe-2S]-[ferredoxin] + 2 H(+). It participates in isoprenoid biosynthesis; dimethylallyl diphosphate biosynthesis; dimethylallyl diphosphate from (2E)-4-hydroxy-3-methylbutenyl diphosphate: step 1/1. The protein operates within isoprenoid biosynthesis; isopentenyl diphosphate biosynthesis via DXP pathway; isopentenyl diphosphate from 1-deoxy-D-xylulose 5-phosphate: step 6/6. Its function is as follows. Catalyzes the conversion of 1-hydroxy-2-methyl-2-(E)-butenyl 4-diphosphate (HMBPP) into a mixture of isopentenyl diphosphate (IPP) and dimethylallyl diphosphate (DMAPP). Acts in the terminal step of the DOXP/MEP pathway for isoprenoid precursor biosynthesis. In Symbiobacterium thermophilum (strain DSM 24528 / JCM 14929 / IAM 14863 / T), this protein is 4-hydroxy-3-methylbut-2-enyl diphosphate reductase.